The primary structure comprises 257 residues: MADDTINAINVDPSEVEKFNKLAGEWWNKTGAFATLHEINPLRLNWIEENVKRGYVSADSQKTAEMGLAGKKVLDVGCGGGILSESMARRGADVTGIDLGTENLKAASLHAEQSNLQDTLRYQHIPVEALAATHAGQFDVVTCMEMLEHVPDPAAIVDACFKLLAPGGVCVLSTINRNPKSYLFAIVGAEYVLRLLDRGTHDYAKFITPAELDKMAIDAEFARQDIIGLHYNPLTKRYWLAQNVDVNYMIAVQKPLA.

Residues R43, G77, D98, and M144 each coordinate S-adenosyl-L-methionine.

The protein belongs to the methyltransferase superfamily. UbiG/COQ3 family.

The enzyme catalyses a 3-demethylubiquinol + S-adenosyl-L-methionine = a ubiquinol + S-adenosyl-L-homocysteine + H(+). It catalyses the reaction a 3-(all-trans-polyprenyl)benzene-1,2-diol + S-adenosyl-L-methionine = a 2-methoxy-6-(all-trans-polyprenyl)phenol + S-adenosyl-L-homocysteine + H(+). Its pathway is cofactor biosynthesis; ubiquinone biosynthesis. Functionally, O-methyltransferase that catalyzes the 2 O-methylation steps in the ubiquinone biosynthetic pathway. This chain is Ubiquinone biosynthesis O-methyltransferase, found in Psychrobacter cryohalolentis (strain ATCC BAA-1226 / DSM 17306 / VKM B-2378 / K5).